We begin with the raw amino-acid sequence, 479 residues long: UDP-N-acetylmuramoyl-L-alanyl-D-glutamate--2,6-diaminopimelate ligase (479 aa).

S21 lines the UDP-N-acetyl-alpha-D-muramoyl-L-alanyl-D-glutamate pocket. Position 98-104 (98-104 (GTNGKSS)) interacts with ATP. UDP-N-acetyl-alpha-D-muramoyl-L-alanyl-D-glutamate-binding positions include 144-145 (TT), S171, Q177, and R179. K211 is modified (N6-carboxylysine). Meso-2,6-diaminopimelate is bound by residues R372, 396 to 399 (DNPR), G446, and E450. A Meso-diaminopimelate recognition motif motif is present at residues 396–399 (DNPR).

This sequence belongs to the MurCDEF family. MurE subfamily. Mg(2+) is required as a cofactor. In terms of processing, carboxylation is probably crucial for Mg(2+) binding and, consequently, for the gamma-phosphate positioning of ATP.

The protein resides in the cytoplasm. The enzyme catalyses UDP-N-acetyl-alpha-D-muramoyl-L-alanyl-D-glutamate + meso-2,6-diaminopimelate + ATP = UDP-N-acetyl-alpha-D-muramoyl-L-alanyl-gamma-D-glutamyl-meso-2,6-diaminopimelate + ADP + phosphate + H(+). It participates in cell wall biogenesis; peptidoglycan biosynthesis. In terms of biological role, catalyzes the addition of meso-diaminopimelic acid to the nucleotide precursor UDP-N-acetylmuramoyl-L-alanyl-D-glutamate (UMAG) in the biosynthesis of bacterial cell-wall peptidoglycan. This Rickettsia rickettsii protein is UDP-N-acetylmuramoyl-L-alanyl-D-glutamate--2,6-diaminopimelate ligase.